The sequence spans 236 residues: tRNA1(Val) (adenine(37)-N6)-methyltransferase (236 aa).

It belongs to the methyltransferase superfamily. tRNA (adenine-N(6)-)-methyltransferase family.

Its subcellular location is the cytoplasm. It carries out the reaction adenosine(37) in tRNA1(Val) + S-adenosyl-L-methionine = N(6)-methyladenosine(37) in tRNA1(Val) + S-adenosyl-L-homocysteine + H(+). Functionally, specifically methylates the adenine in position 37 of tRNA(1)(Val) (anticodon cmo5UAC). This Aeromonas salmonicida (strain A449) protein is tRNA1(Val) (adenine(37)-N6)-methyltransferase.